A 255-amino-acid chain; its full sequence is Sulfate transporter CysZ (255 aa).

4 helical membrane-spanning segments follow: residues Leu26–Ala46, Leu71–Leu91, Leu150–Phe170, and Ile211–Ala231.

It belongs to the CysZ family.

Its subcellular location is the cell inner membrane. In terms of biological role, high affinity, high specificity proton-dependent sulfate transporter, which mediates sulfate uptake. Provides the sulfur source for the cysteine synthesis pathway. This Pseudomonas fluorescens (strain SBW25) protein is Sulfate transporter CysZ.